A 339-amino-acid polypeptide reads, in one-letter code: Phenylalanine--tRNA ligase alpha subunit (339 aa).

Residue Glu-253 coordinates Mg(2+).

This sequence belongs to the class-II aminoacyl-tRNA synthetase family. Phe-tRNA synthetase alpha subunit type 1 subfamily. Tetramer of two alpha and two beta subunits. Requires Mg(2+) as cofactor.

It is found in the cytoplasm. The enzyme catalyses tRNA(Phe) + L-phenylalanine + ATP = L-phenylalanyl-tRNA(Phe) + AMP + diphosphate + H(+). This is Phenylalanine--tRNA ligase alpha subunit from Chromohalobacter salexigens (strain ATCC BAA-138 / DSM 3043 / CIP 106854 / NCIMB 13768 / 1H11).